Here is a 350-residue protein sequence, read N- to C-terminus: Ribosomal RNA large subunit methyltransferase M (350 aa).

Residues 217-220, Asp236, Asp256, and Asp272 contribute to the S-adenosyl-L-methionine site; that span reads APGG. Lys301 acts as the Proton acceptor in catalysis.

The protein belongs to the class I-like SAM-binding methyltransferase superfamily. RNA methyltransferase RlmE family. RlmM subfamily. As to quaternary structure, monomer.

Its subcellular location is the cytoplasm. It catalyses the reaction cytidine(2498) in 23S rRNA + S-adenosyl-L-methionine = 2'-O-methylcytidine(2498) in 23S rRNA + S-adenosyl-L-homocysteine + H(+). Catalyzes the 2'-O-methylation at nucleotide C2498 in 23S rRNA. This Cellvibrio japonicus (strain Ueda107) (Pseudomonas fluorescens subsp. cellulosa) protein is Ribosomal RNA large subunit methyltransferase M.